A 220-amino-acid chain; its full sequence is 26S proteasome non-ATPase regulatory subunit 9 (220 aa).

Coiled coils occupy residues 4 to 32 (GTTT…GQIL) and 61 to 91 (RLAR…YHSE). The 99-residue stretch at 102–200 (RASALDLDSD…QLDLILVPKT (99 aa)) folds into the PDZ domain.

The protein belongs to the proteasome subunit p27 family. Interacts with PI31; this interaction is increased by PI31 ADP-ribosylation. Interacts with Rpt5.

In terms of biological role, acts as a chaperone during the assembly of the 26S proteasome, specifically of the base subcomplex of the PA700/19S regulatory complex (RC). In Drosophila melanogaster (Fruit fly), this protein is 26S proteasome non-ATPase regulatory subunit 9.